Here is a 507-residue protein sequence, read N- to C-terminus: Interleukin-17 receptor E-like protein (507 aa).

The N-terminal stretch at 1-21 is a signal peptide; it reads MLAGQALAFLGLTWGTFQSLA.

The protein localises to the secreted. The sequence is that of Interleukin-17 receptor E-like protein from Homo sapiens (Human).